The chain runs to 148 residues: Deoxyuridine 5'-triphosphate nucleotidohydrolase (148 aa).

Substrate contacts are provided by residues 68–70 (RSG), Asn-81, 85–87 (TID), and Lys-95.

Belongs to the dUTPase family. Requires Mg(2+) as cofactor.

The enzyme catalyses dUTP + H2O = dUMP + diphosphate + H(+). It functions in the pathway pyrimidine metabolism; dUMP biosynthesis; dUMP from dCTP (dUTP route): step 2/2. Its function is as follows. This enzyme is involved in nucleotide metabolism: it produces dUMP, the immediate precursor of thymidine nucleotides and it decreases the intracellular concentration of dUTP so that uracil cannot be incorporated into DNA. This Rickettsia massiliae (strain Mtu5) protein is Deoxyuridine 5'-triphosphate nucleotidohydrolase.